The sequence spans 215 residues: UPF0319 protein VV2_0960 (215 aa).

An N-terminal signal peptide occupies residues 1–21; sequence MNIIKPLTCILAMSISGLATA.

This sequence belongs to the UPF0319 family.

In Vibrio vulnificus (strain CMCP6), this protein is UPF0319 protein VV2_0960.